The sequence spans 162 residues: Caveolin-2 (162 aa).

Residues M1–K86 lie on the Cytoplasmic side of the membrane. Y19 bears the Phosphotyrosine; by SRC mark. S20 and S23 each carry phosphoserine. A Phosphotyrosine; by SRC modification is found at Y27. Position 36 is a phosphoserine (S36). The helical intramembrane region spans F87 to L107. Topologically, residues S108 to D162 are cytoplasmic.

The protein belongs to the caveolin family. In terms of assembly, monomer or homodimer. Interacts with CAV1; the interaction forms a stable heterooligomeric complex that is required for targeting to lipid rafts and for caveolae formation. Tyrosine phosphorylated forms do not form heterooligomers with the Tyr-19-phosphorylated form existing as a monomer or dimer, and the Tyr-27-form as a monomer only. Interacts (tyrosine phosphorylated form) with the SH2 domain-containing proteins, RASA1, NCK1 and SRC. Interacts (tyrosine phosphorylated form) with INSR, the interaction (Tyr-27-phosphorylated form) is increased on insulin stimulation. Interacts (Tyr-19 phosphorylated form) with MAPK1 (phosphorylated form); the interaction, promoted by insulin, leads to nuclear location and MAPK1 activation. Interacts with STAT3; the interaction is increased on insulin-induced tyrosine phosphorylation leading to STAT activation. Post-translationally, phosphorylated on serine and tyrosine residues. CAV1 promotes phosphorylation on Ser-23 which then targets the complex to the plasma membrane, lipid rafts and caveolae. Phosphorylation on Ser-36 appears to modulate mitosis in endothelial cells. Phosphorylation on both Tyr-19 and Tyr-27 is required for insulin-induced 'Ser-727' phosphorylation of STAT3 and its activation. Phosphorylation on Tyr-19 is required for insulin-induced phosphorylation of MAPK1 and DNA binding of STAT3. Tyrosine phosphorylation is induced by both EGF and insulin (By. similarity).

It localises to the nucleus. The protein resides in the cytoplasm. It is found in the golgi apparatus membrane. Its subcellular location is the cell membrane. The protein localises to the membrane. It localises to the caveola. In terms of biological role, may act as a scaffolding protein within caveolar membranes. Interacts directly with G-protein alpha subunits and can functionally regulate their activity. Acts as an accessory protein in conjunction with CAV1 in targeting to lipid rafts and driving caveolae formation. The Ser-36 phosphorylated form has a role in modulating mitosis in endothelial cells. Positive regulator of cellular mitogenesis of the MAPK signaling pathway. Required for the insulin-stimulated nuclear translocation and activation of MAPK1 and STAT3, and the subsequent regulation of cell cycle progression. The protein is Caveolin-2 (CAV2) of Aotus nancymaae (Ma's night monkey).